The primary structure comprises 232 residues: ATP-dependent dethiobiotin synthetase BioD (232 aa).

Residue G16–V21 coordinates ATP. Residue T20 coordinates Mg(2+). K41 is an active-site residue. T45 contacts substrate. ATP contacts are provided by residues D52, E111–G114, N171–Q172, P200–S202, and E207. D52 and E111 together coordinate Mg(2+).

The protein belongs to the dethiobiotin synthetase family. Homodimer. Requires Mg(2+) as cofactor.

The protein localises to the cytoplasm. The enzyme catalyses (7R,8S)-7,8-diammoniononanoate + CO2 + ATP = (4R,5S)-dethiobiotin + ADP + phosphate + 3 H(+). It catalyses the reaction (7R,8S)-8-amino-7-(carboxyamino)nonanoate + ATP = (4R,5S)-dethiobiotin + ADP + phosphate + H(+). The protein operates within cofactor biosynthesis; biotin biosynthesis; biotin from 7,8-diaminononanoate: step 1/2. Its function is as follows. Catalyzes a mechanistically unusual reaction, the ATP-dependent insertion of CO2 between the N7 and N8 nitrogen atoms of 7,8-diaminopelargonic acid (DAPA, also called 7,8-diammoniononanoate) to form a ureido ring. This archaea does not encode bioA (which catalyzes the formation of the precursor for this reaction in the cannonical pathway), instead it encodes bioU, which replaces bioA and also performs the first half of the cannonical BioD reaction. Thus in this archaea BioD has a different substrate. In Haloferax mediterranei (strain ATCC 33500 / DSM 1411 / JCM 8866 / NBRC 14739 / NCIMB 2177 / R-4) (Halobacterium mediterranei), this protein is ATP-dependent dethiobiotin synthetase BioD.